The sequence spans 131 residues: Fluoride-specific ion channel FluC 2 (131 aa).

Helical transmembrane passes span 4–24 (IIQGLLFVALGSVFGGMARFW), 46–66 (VSGAFAIGVFGALAASGHGVF), 71–91 (PWLFAVTGFLGCYTTVSSFAL), and 105–125 (AISNVTFSLVFCLIAVALGFA). G81 and T84 together coordinate Na(+).

The protein belongs to the fluoride channel Fluc/FEX (TC 1.A.43) family.

The protein localises to the cell inner membrane. It catalyses the reaction fluoride(in) = fluoride(out). Its activity is regulated as follows. Na(+) is not transported, but it plays an essential structural role and its presence is essential for fluoride channel function. Fluoride-specific ion channel. Important for reducing fluoride concentration in the cell, thus reducing its toxicity. The protein is Fluoride-specific ion channel FluC 2 of Rhodopseudomonas palustris (strain BisB18).